Reading from the N-terminus, the 481-residue chain is MATPNAQSGKITQVIGPVVDVEFPPGALPDIYTALSVTNPAIDARADNLVIEVSQHLGENTARCIAMDSTDGLVRGMVVRDTGAPISVPVGKEVLGRILNVVGDPVDERGPVASVRKFPIHRPAPTLVDQNVKIEAFETGIKVIDLLAPYLRGGKIGLFGGAGVGKTVLLMELVNNVAKKRGGFSVFAGVGERTREGNDLYHEMIESGVINKDDLSKSQCVLVYGQMNEPPGARARVALSALAIAEYFRDEEKRDMLLFIDNIFRFTQAGSEVSALLGRIPSAVGYQPTLSTEMGELQERITSTKNGAITSVQAIYVPADDLTDPAPATAFAHLDATTVLSRKLTEIGIYPAVDPLDSTSRILDPLVVGAEHYQVAREVQETLQRYKDLQDIIAILGMDELSEDDKLTVARARKVQRFLSQPFHVAEQFTGNPGKYVELADTIRGFKEIVEGKHDDLPEQAFYMVGGIEEAVEKAKKLAAG.

160–167 (GGAGVGKT) is an ATP binding site.

Belongs to the ATPase alpha/beta chains family. F-type ATPases have 2 components, CF(1) - the catalytic core - and CF(0) - the membrane proton channel. CF(1) has five subunits: alpha(3), beta(3), gamma(1), delta(1), epsilon(1). CF(0) has three main subunits: a(1), b(2) and c(9-12). The alpha and beta chains form an alternating ring which encloses part of the gamma chain. CF(1) is attached to CF(0) by a central stalk formed by the gamma and epsilon chains, while a peripheral stalk is formed by the delta and b chains.

It localises to the cell inner membrane. It carries out the reaction ATP + H2O + 4 H(+)(in) = ADP + phosphate + 5 H(+)(out). Its function is as follows. Produces ATP from ADP in the presence of a proton gradient across the membrane. The catalytic sites are hosted primarily by the beta subunits. This is ATP synthase subunit beta from Anaeromyxobacter sp. (strain Fw109-5).